Consider the following 332-residue polypeptide: Glycerol-3-phosphate dehydrogenase [NAD(P)+] 2 (332 aa).

NADPH-binding residues include Ser17, Trp18, Arg37, and Lys112. Positions 112 and 140 each coordinate sn-glycerol 3-phosphate. Ala144 serves as a coordination point for NADPH. Sn-glycerol 3-phosphate-binding residues include Lys195, Asp243, Ser253, Arg254, and Asn255. The active-site Proton acceptor is Lys195. Arg254 contributes to the NADPH binding site. NADPH-binding residues include Val278 and Glu280.

Belongs to the NAD-dependent glycerol-3-phosphate dehydrogenase family.

The protein resides in the cytoplasm. The catalysed reaction is sn-glycerol 3-phosphate + NAD(+) = dihydroxyacetone phosphate + NADH + H(+). It catalyses the reaction sn-glycerol 3-phosphate + NADP(+) = dihydroxyacetone phosphate + NADPH + H(+). Its pathway is membrane lipid metabolism; glycerophospholipid metabolism. Catalyzes the reduction of the glycolytic intermediate dihydroxyacetone phosphate (DHAP) to sn-glycerol 3-phosphate (G3P), the key precursor for phospholipid synthesis. This chain is Glycerol-3-phosphate dehydrogenase [NAD(P)+] 2, found in Mycolicibacterium paratuberculosis (strain ATCC BAA-968 / K-10) (Mycobacterium paratuberculosis).